Here is a 326-residue protein sequence, read N- to C-terminus: 4-hydroxythreonine-4-phosphate dehydrogenase (326 aa).

His-133 and Thr-134 together coordinate substrate. A divalent metal cation is bound by residues His-163, His-208, and His-263. Residues Lys-271, Asn-280, and Arg-289 each coordinate substrate.

Belongs to the PdxA family. As to quaternary structure, homodimer. Zn(2+) serves as cofactor. Mg(2+) is required as a cofactor. The cofactor is Co(2+).

It localises to the cytoplasm. It carries out the reaction 4-(phosphooxy)-L-threonine + NAD(+) = 3-amino-2-oxopropyl phosphate + CO2 + NADH. The protein operates within cofactor biosynthesis; pyridoxine 5'-phosphate biosynthesis; pyridoxine 5'-phosphate from D-erythrose 4-phosphate: step 4/5. Its function is as follows. Catalyzes the NAD(P)-dependent oxidation of 4-(phosphooxy)-L-threonine (HTP) into 2-amino-3-oxo-4-(phosphooxy)butyric acid which spontaneously decarboxylates to form 3-amino-2-oxopropyl phosphate (AHAP). The chain is 4-hydroxythreonine-4-phosphate dehydrogenase from Pseudoalteromonas atlantica (strain T6c / ATCC BAA-1087).